The primary structure comprises 2003 residues: Neurogenic locus notch homolog protein 4 (2003 aa).

Positions 1-23 are cleaved as a signal peptide; that stretch reads MQPPSLLLLLLLLLLLCVSVVRP. EGF-like domains lie at 24-63, 64-115, 118-155, and 156-192; these read RGLLCGSFPEPCANGGTCLSLSLGQGTCQCAPGFLGETCQ, FPDP…ERCQ, LEDPCPPSFCSKRGRCHIQASGRPQCSCMPGWTGEQCQ, and LRDFCSANPCVNGGVCLATYPQIQCHCPPGFEGHACE. Residues 24-1447 lie on the Extracellular side of the membrane; sequence RGLLCGSFPE…TAPPANQLPW (1424 aa). Disulfide bonds link cysteine 28-cysteine 41, cysteine 35-cysteine 51, cysteine 53-cysteine 62, cysteine 68-cysteine 80, cysteine 74-cysteine 103, cysteine 105-cysteine 114, cysteine 122-cysteine 133, cysteine 127-cysteine 143, cysteine 145-cysteine 154, cysteine 160-cysteine 171, cysteine 165-cysteine 180, cysteine 182-cysteine 191, cysteine 198-cysteine 211, cysteine 205-cysteine 220, cysteine 222-cysteine 231, cysteine 238-cysteine 249, cysteine 243-cysteine 262, cysteine 264-cysteine 273, cysteine 280-cysteine 291, cysteine 285-cysteine 300, cysteine 302-cysteine 311, cysteine 318-cysteine 332, cysteine 326-cysteine 341, cysteine 343-cysteine 352, cysteine 359-cysteine 370, cysteine 364-cysteine 379, cysteine 381-cysteine 390, cysteine 396-cysteine 407, cysteine 401-cysteine 418, cysteine 420-cysteine 429, cysteine 436-cysteine 452, cysteine 446-cysteine 461, cysteine 463-cysteine 472, cysteine 479-cysteine 490, cysteine 484-cysteine 499, cysteine 501-cysteine 510, cysteine 517-cysteine 528, cysteine 522-cysteine 537, cysteine 539-cysteine 548, cysteine 555-cysteine 566, cysteine 560-cysteine 575, cysteine 577-cysteine 586, cysteine 593-cysteine 604, cysteine 598-cysteine 613, cysteine 615-cysteine 624, cysteine 629-cysteine 640, cysteine 634-cysteine 649, and cysteine 651-cysteine 658. The 39-residue stretch at 194–232 folds into the EGF-like 5; calcium-binding domain; the sequence is DVNECFQDPGPCPKGTSCHNTLGSFQCLCPVGQEGPRCE. Residues 234 to 274 enclose the EGF-like 6 domain; that stretch reads RAGPCPPRGCSNGGTCQLMPEKDSTFHLCLCPPGFIGPDCE. The 37-residue stretch at 276-312 folds into the EGF-like 7; calcium-binding domain; the sequence is NPDNCVSHQCQNGGTCQDGLDTYTCLCPETWTGWDCS. Positions 314 to 353 constitute an EGF-like 8; calcium-binding domain; that stretch reads DVDECETQGPPHCRNGGTCQNSAGSFHCVCVSGWGGTSCE. The EGF-like 9; calcium-binding domain occupies 355 to 391; sequence NLDDCIAATCAPGSTCIDRVGSFSCLCPPGRTGLLCH. The region spanning 392-430 is the EGF-like 10 domain; sequence LEDMCLSQPCHGDAQCSTNPLTGSTLCLCQPGYSGPTCH. Positions 432 to 473 constitute an EGF-like 11; calcium-binding domain; sequence DLDECLMAQQGPSPCEHGGSCLNTPGSFNCLCPPGYTGSRCE. The EGF-like 12; calcium-binding domain maps to 475 to 511; that stretch reads DHNECLSQPCHPGSTCLDLLATFHCLCPPGLEGQLCE. The region spanning 513–549 is the EGF-like 13; calcium-binding domain; sequence ETNECASAPCLNHADCHDLLNGFQCICLPGFSGTRCE. In terms of domain architecture, EGF-like 14; calcium-binding spans 551–587; it reads DIDECRSSPCANGGQCQDQPGAFHCKCLPGFEGPRCQ. The EGF-like 15; calcium-binding domain maps to 589-625; sequence EVDECLSDPCPVGASCLDLPGAFFCLCPSGFTGQLCE. EGF-like domains are found at residues 626 to 659, 661 to 689, 691 to 727, 729 to 765, 767 to 803, 806 to 842, 844 to 880, 882 to 928, 930 to 966, 968 to 1004, 1006 to 1044, 1046 to 1085, 1087 to 1126, and 1130 to 1171; these read VPLCAPNLCQPKQICKDQKDKANCLCPDGSPGCA, PEDNCTCHHGHCQRSSCVCDVGWTGPECE, ELGGCISAPCAHGGTCYPQPSGYNCTCPTGYTGPTCS, EMTACHSGPCLNGGSCNPSPGGYYCTCPPSHTGPQCQ, STDYCVSAPCFNGGTCVNRPGTFSCLCAMGFQGPRCE, LRPSCADSPCRNRATCQDSPQGPRCLCPTGYTGGSCQ, LMDLCAQKPCPRNSHCLQTGPSFHCLCLQGWTGPLCN, PLSS…SLCQ, HVNPCESRPCQNGATCMAQPSGYLCQCAPGYDGQNCS, ELDACQSQPCHNHGTCTPKPGGFHCACPPGFVGLRCE, DVDECLDQPCHPTGTAACHSLANAFYCQCLPGHTGQWCE, EIDPCHSQPCFHGGTCEATAGSPLGFICHCPKGFEGPTCS, RAPSCGFHHCHHGGLCLPSPKPGFPPRCACLSGYGGPDCL, and APKG…PRCQ. Asparagine 664 is a glycosylation site (N-linked (GlcNAc...) asparagine). Disulfide bonds link cysteine 665/cysteine 672, cysteine 667/cysteine 677, cysteine 679/cysteine 688, cysteine 695/cysteine 706, cysteine 700/cysteine 715, cysteine 717/cysteine 726, cysteine 733/cysteine 744, cysteine 738/cysteine 753, cysteine 755/cysteine 764, cysteine 771/cysteine 782, cysteine 776/cysteine 791, cysteine 793/cysteine 802, cysteine 810/cysteine 821, cysteine 815/cysteine 830, cysteine 832/cysteine 841, cysteine 848/cysteine 859, cysteine 853/cysteine 868, cysteine 870/cysteine 879, cysteine 886/cysteine 907, cysteine 901/cysteine 916, cysteine 918/cysteine 927, cysteine 934/cysteine 945, cysteine 939/cysteine 954, cysteine 956/cysteine 965, cysteine 972/cysteine 983, cysteine 977/cysteine 992, cysteine 994/cysteine 1003, cysteine 1010/cysteine 1023, cysteine 1015/cysteine 1032, cysteine 1034/cysteine 1043, cysteine 1050/cysteine 1061, cysteine 1055/cysteine 1073, cysteine 1075/cysteine 1084, cysteine 1091/cysteine 1102, cysteine 1096/cysteine 1114, cysteine 1116/cysteine 1125, cysteine 1134/cysteine 1146, cysteine 1140/cysteine 1159, cysteine 1161/cysteine 1170, cysteine 1178/cysteine 1191, cysteine 1187/cysteine 1203, cysteine 1214/cysteine 1238, cysteine 1220/cysteine 1233, cysteine 1229/cysteine 1245, cysteine 1251/cysteine 1277, cysteine 1259/cysteine 1272, and cysteine 1268/cysteine 1284. N-linked (GlcNAc...) asparagine glycosylation occurs at asparagine 714. Residue asparagine 964 is glycosylated (N-linked (GlcNAc...) asparagine). The N-linked (GlcNAc...) asparagine glycan is linked to asparagine 1143. LNR repeat units follow at residues 1170–1213, 1214–1250, and 1251–1294; these read CQKP…PWKG, CPSHSRCWLLFRDGQCHPQCDSEECLFDGYDCETPPA, and CTPA…PEWG. A disordered region spans residues 1347–1371; the sequence is AEEKLGGTRDPTYQERAAPQTQPLG. A helical membrane pass occupies residues 1448-1468; that stretch reads PVLCSPVAGVILLALGALLVL. Residues 1469 to 2003 are Cytoplasmic-facing; it reads QLIRRRRREH…PINQGGEGKK (535 aa). Residues 1485–1508 form a disordered region; sequence PGFTRRPRTQSAPHRRRPPLGEDS. Residues 1489 to 1502 show a composition bias toward basic residues; it reads RRPRTQSAPHRRRP. ANK repeat units follow at residues 1633–1665, 1666–1698, 1700–1732, 1733–1765, and 1766–1798; these read TGETPLHLAARFSRPTAARRLLEAGANPNQPDR, AGRTPLHAAVAADAREVCQLLLRSRQTAVDART, DGTTPLMLAARLAVEDLVEELIAAQADVGARDK, WGKTALHWAAAVNNARAARSLLQAGADKDAQDN, and REQTPLFLAAREGAVEVAQLLLGLGAARELRDQ. 2 disordered regions span residues 1900–1927 and 1968–2003; these read LSGVGAGGGPTPRGRRFSAGMRGPRPNP and PPPCLTPSPERGSPQLDCGPPALQEMPINQGGEGKK.

Belongs to the NOTCH family. Heterodimer of a C-terminal fragment N(TM) and a N-terminal fragment N(EC) which are probably linked by disulfide bonds. Interacts with MAML1, MAML2 and MAML3 which act as transcriptional coactivators for NOTCH4. As to quaternary structure, (Microbial infection) Interacts with Epstein-Barr virus (EBV) RK-BARF0. In terms of processing, synthesized in the endoplasmic reticulum as an inactive form which is proteolytically cleaved by a furin-like convertase in the trans-Golgi network before it reaches the plasma membrane to yield an active, ligand-accessible form. Cleavage results in a C-terminal fragment N(TM) and a N-terminal fragment N(EC). Following ligand binding, it is cleaved by TNF-alpha converting enzyme (TACE) to yield a membrane-associated intermediate fragment called notch extracellular truncation (NEXT). This fragment is then cleaved by presenilin dependent gamma-secretase to release a notch-derived peptide containing the intracellular domain (NICD) from the membrane. Phosphorylated. Highly expressed in the heart, moderately in the lung and placenta and at low levels in the liver, skeletal muscle, kidney, pancreas, spleen, lymph node, thymus, bone marrow and fetal liver. No expression was seen in adult brain or peripheral blood leukocytes.

It localises to the cell membrane. It is found in the nucleus. Functionally, functions as a receptor for membrane-bound ligands Jagged1, Jagged2 and Delta1 to regulate cell-fate determination. Upon ligand activation through the released notch intracellular domain (NICD) it forms a transcriptional activator complex with RBPJ/RBPSUH and activates genes of the enhancer of split locus. Affects the implementation of differentiation, proliferation and apoptotic programs. May regulate branching morphogenesis in the developing vascular system. The chain is Neurogenic locus notch homolog protein 4 from Homo sapiens (Human).